A 64-amino-acid polypeptide reads, in one-letter code: MKSTLMTASVLILVLLSIVDYASVYAEFIDSEISLERQWINACFNVCMKISSDKKYCKYLCGKN.

The signal sequence occupies residues 1-26; sequence MKSTLMTASVLILVLLSIVDYASVYA. The propeptide occupies 27–36; the sequence is EFIDSEISLE. 2 disulfide bridges follow: C43/C61 and C47/C57.

This sequence belongs to the short scorpion toxin superfamily. Potassium channel inhibitor kappa-KTx family. Kappa-KTx 3 subfamily. In terms of tissue distribution, expressed by the venom gland.

The protein resides in the secreted. In terms of biological role, potassium channel inhibitor (Kv). The polypeptide is Potassium channel toxin kappa-KTx 3.1 (Heterometrus petersii (Asian forest scorpion)).